The primary structure comprises 526 residues: ATP synthase subunit alpha (526 aa).

174–181 (GDRKTGKT) serves as a coordination point for ATP. The span at 505–520 (FEPARSEVKVETRPQE) shows a compositional bias: basic and acidic residues. Residues 505–526 (FEPARSEVKVETRPQEEEGEEG) form a disordered region.

This sequence belongs to the ATPase alpha/beta chains family. In terms of assembly, F-type ATPases have 2 components, CF(1) - the catalytic core - and CF(0) - the membrane proton channel. CF(1) has five subunits: alpha(3), beta(3), gamma(1), delta(1), epsilon(1). CF(0) has three main subunits: a(1), b(2) and c(9-12). The alpha and beta chains form an alternating ring which encloses part of the gamma chain. CF(1) is attached to CF(0) by a central stalk formed by the gamma and epsilon chains, while a peripheral stalk is formed by the delta and b chains.

It localises to the cell membrane. The catalysed reaction is ATP + H2O + 4 H(+)(in) = ADP + phosphate + 5 H(+)(out). Its function is as follows. Produces ATP from ADP in the presence of a proton gradient across the membrane. The alpha chain is a regulatory subunit. This chain is ATP synthase subunit alpha, found in Rubrobacter xylanophilus (strain DSM 9941 / JCM 11954 / NBRC 16129 / PRD-1).